Consider the following 150-residue polypeptide: Catabolic 3-dehydroquinase (150 aa).

Residue Tyr24 is the Proton acceptor of the active site. Positions 75, 81, and 88 each coordinate substrate. The active-site Proton donor is the His101. Substrate contacts are provided by residues 102–103 and Arg112; that span reads VS.

It belongs to the type-II 3-dehydroquinase family. As to quaternary structure, homododecamer. Adopts a ring-like structure, composed of an arrangement of two hexameric rings stacked on top of one another.

It catalyses the reaction 3-dehydroquinate = 3-dehydroshikimate + H2O. Its pathway is aromatic compound metabolism; 3,4-dihydroxybenzoate biosynthesis; 3,4-dihydroxybenzoate from 3-dehydroquinate: step 1/2. Functionally, is involved in the catabolism of quinate. Allows the utilization of quinate as carbon source via the beta-ketoadipate pathway. The polypeptide is Catabolic 3-dehydroquinase (Aspergillus clavatus (strain ATCC 1007 / CBS 513.65 / DSM 816 / NCTC 3887 / NRRL 1 / QM 1276 / 107)).